Consider the following 113-residue polypeptide: Probable mesentericin-Y105 immunity protein (113 aa).

The protein belongs to the immunity protein EntA family.

Imparts immunity to mesentericin-Y105 to naturally sensitive host strains. The sequence is that of Probable mesentericin-Y105 immunity protein (mesI) from Leuconostoc mesenteroides.